A 390-amino-acid polypeptide reads, in one-letter code: GTPase Obg (390 aa).

The Obg domain maps to 1–159 (MKFVDEATIL…RELTLELLLL (159 aa)). The disordered stretch occupies residues 128-147 (SRFKSSVNRAPRQKTNGTKG). The segment covering 129 to 145 (RFKSSVNRAPRQKTNGT) has biased composition (polar residues). The 174-residue stretch at 160-333 (ADVGMLGLPN…LCWDVMNFLK (174 aa)) folds into the OBG-type G domain. Residues 166-173 (GLPNAGKS), 191-195 (FTTLV), 213-216 (DIPG), 283-286 (NKVD), and 314-316 (SAA) each bind GTP. Residues S173 and T193 each coordinate Mg(2+).

It belongs to the TRAFAC class OBG-HflX-like GTPase superfamily. OBG GTPase family. In terms of assembly, monomer. Mg(2+) serves as cofactor.

It is found in the cytoplasm. Its function is as follows. An essential GTPase which binds GTP, GDP and possibly (p)ppGpp with moderate affinity, with high nucleotide exchange rates and a fairly low GTP hydrolysis rate. Plays a role in control of the cell cycle, stress response, ribosome biogenesis and in those bacteria that undergo differentiation, in morphogenesis control. The polypeptide is GTPase Obg (Pectobacterium atrosepticum (strain SCRI 1043 / ATCC BAA-672) (Erwinia carotovora subsp. atroseptica)).